Consider the following 457-residue polypeptide: Putative HD domain-containing protein L394 (457 aa).

An HD domain is found at 65–206 (RLEHSIGVYD…GIDVDKFDYL (142 aa)).

This chain is Putative HD domain-containing protein L394, found in Acanthamoeba polyphaga mimivirus (APMV).